A 337-amino-acid chain; its full sequence is MIQKNWQELIKPNKVDFITHGSRTHATVVAEPLERGFGLTLGNALRRVLLSSLRGAAVTAVQIDGVLHEFSSIPGVREDVTDIVLNIKEIAIRMEGEGPKRMVVRKEGPGVVTAGDIQTVGDVEILNPEHVICTLDEGAEIRMEFTVNTGKGYVPADRNRAEDAPIGLIPVDSLYSPVRKVSYKIENTREGQVLDYDKLTLNIETNGSVTGEDAVAYAARILQDQLSIFVNFEEPQKEAPQEQVAELAFNPVLLKKVDELELSVRSANCLKTDNIVYIGDLIQKTEAEMLRTPNFGRKSLNEIKEVLASMGLHLGMEIPAWPPENIEDLAKRYEDQY.

The alpha N-terminal domain (alpha-NTD) stretch occupies residues 1 to 233; sequence MIQKNWQELI…DQLSIFVNFE (233 aa). The segment at 249 to 337 is alpha C-terminal domain (alpha-CTD); it reads FNPVLLKKVD…DLAKRYEDQY (89 aa).

The protein belongs to the RNA polymerase alpha chain family. In terms of assembly, homodimer. The RNAP catalytic core consists of 2 alpha, 1 beta, 1 beta' and 1 omega subunit. When a sigma factor is associated with the core the holoenzyme is formed, which can initiate transcription.

The enzyme catalyses RNA(n) + a ribonucleoside 5'-triphosphate = RNA(n+1) + diphosphate. Functionally, DNA-dependent RNA polymerase catalyzes the transcription of DNA into RNA using the four ribonucleoside triphosphates as substrates. In Brucella canis (strain ATCC 23365 / NCTC 10854 / RM-666), this protein is DNA-directed RNA polymerase subunit alpha.